The primary structure comprises 389 residues: Jasmonate O-methyltransferase (389 aa).

An S-adenosyl-L-homocysteine-binding site is contributed by tyrosine 18. Glutamine 25 provides a ligand contact to jasmonate. Cysteine 60, asparagine 65, aspartate 97, leucine 98, serine 142, and phenylalanine 143 together coordinate S-adenosyl-L-homocysteine. Jasmonate-binding residues include histidine 163 and tryptophan 164. Asparagine 186, aspartate 272, phenylalanine 274, and asparagine 275 together coordinate Mg(2+).

The protein belongs to the methyltransferase superfamily. Type-7 methyltransferase family. Mg(2+) serves as cofactor. As to expression, expressed in rosettes, cauline leaves and developing flowers but not in young seedlings.

Its subcellular location is the cytoplasm. It is found in the nucleus. The catalysed reaction is jasmonate + S-adenosyl-L-methionine = methyl (-)-jasmonate + S-adenosyl-L-homocysteine. It participates in lipid metabolism; oxylipin biosynthesis. Functionally, catalyzes the methylation of jasmonate into methyljasmonate, a plant volatile that acts as an important cellular regulator mediating diverse developmental processes and defense responses. This Arabidopsis thaliana (Mouse-ear cress) protein is Jasmonate O-methyltransferase.